The primary structure comprises 297 residues: Phosphoribosylaminoimidazole-succinocarboxamide synthase (297 aa).

The protein belongs to the SAICAR synthetase family.

The catalysed reaction is 5-amino-1-(5-phospho-D-ribosyl)imidazole-4-carboxylate + L-aspartate + ATP = (2S)-2-[5-amino-1-(5-phospho-beta-D-ribosyl)imidazole-4-carboxamido]succinate + ADP + phosphate + 2 H(+). It functions in the pathway purine metabolism; IMP biosynthesis via de novo pathway; 5-amino-1-(5-phospho-D-ribosyl)imidazole-4-carboxamide from 5-amino-1-(5-phospho-D-ribosyl)imidazole-4-carboxylate: step 1/2. This chain is Phosphoribosylaminoimidazole-succinocarboxamide synthase (purC), found in Mycobacterium leprae (strain TN).